Here is a 486-residue protein sequence, read N- to C-terminus: NADH-quinone oxidoreductase subunit N (486 aa).

The next 14 helical transmembrane spans lie at 8–28 (FIAL…MLAV), 38–58 (ATLS…VLGV), 73–93 (ACFY…LAHA), 105–125 (LYLL…AQHL), 128–148 (LFIG…YAFF), 169–189 (FLLF…FAGL), 196–216 (HVLS…GLGF), 235–255 (PAPV…AVLL), 269–289 (LLNI…NLLA), 304–324 (IAHL…AVEA), 325–345 (VGVY…VITL), 373–393 (AVMT…GFIG), 405–427 (HLWW…YLRV), and 454–474 (IMLV…QPLL).

It belongs to the complex I subunit 2 family. NDH-1 is composed of 13 different subunits. Subunits NuoA, H, J, K, L, M, N constitute the membrane sector of the complex.

It is found in the cell inner membrane. It carries out the reaction a quinone + NADH + 5 H(+)(in) = a quinol + NAD(+) + 4 H(+)(out). NDH-1 shuttles electrons from NADH, via FMN and iron-sulfur (Fe-S) centers, to quinones in the respiratory chain. The immediate electron acceptor for the enzyme in this species is believed to be ubiquinone. Couples the redox reaction to proton translocation (for every two electrons transferred, four hydrogen ions are translocated across the cytoplasmic membrane), and thus conserves the redox energy in a proton gradient. This Pseudomonas aeruginosa (strain ATCC 15692 / DSM 22644 / CIP 104116 / JCM 14847 / LMG 12228 / 1C / PRS 101 / PAO1) protein is NADH-quinone oxidoreductase subunit N.